The following is a 284-amino-acid chain: Bifunctional protein FolD (284 aa).

NADP(+) contacts are provided by residues 166–168 (GAS) and Ile232.

The protein belongs to the tetrahydrofolate dehydrogenase/cyclohydrolase family. In terms of assembly, homodimer.

The enzyme catalyses (6R)-5,10-methylene-5,6,7,8-tetrahydrofolate + NADP(+) = (6R)-5,10-methenyltetrahydrofolate + NADPH. The catalysed reaction is (6R)-5,10-methenyltetrahydrofolate + H2O = (6R)-10-formyltetrahydrofolate + H(+). The protein operates within one-carbon metabolism; tetrahydrofolate interconversion. In terms of biological role, catalyzes the oxidation of 5,10-methylenetetrahydrofolate to 5,10-methenyltetrahydrofolate and then the hydrolysis of 5,10-methenyltetrahydrofolate to 10-formyltetrahydrofolate. This chain is Bifunctional protein FolD, found in Pseudomonas fluorescens (strain Pf0-1).